A 192-amino-acid polypeptide reads, in one-letter code: Fe/S biogenesis protein NfuA (192 aa).

The [4Fe-4S] cluster site is built by Cys-149 and Cys-152.

This sequence belongs to the NfuA family. As to quaternary structure, homodimer. [4Fe-4S] cluster is required as a cofactor.

In terms of biological role, involved in iron-sulfur cluster biogenesis. Binds a 4Fe-4S cluster, can transfer this cluster to apoproteins, and thereby intervenes in the maturation of Fe/S proteins. Could also act as a scaffold/chaperone for damaged Fe/S proteins. The chain is Fe/S biogenesis protein NfuA from Shewanella putrefaciens (strain CN-32 / ATCC BAA-453).